Reading from the N-terminus, the 184-residue chain is Cobalamin adenosyltransferase (184 aa).

Residues 1 to 21 form a disordered region; sequence MGNRLSKIATRTGDAGTTGLG. Residues 10 to 13, 18 to 19, Lys-28, 130 to 134, and Asn-154 contribute to the ATP site; these read TRTG, TG, and RRAER.

This sequence belongs to the Cob(I)alamin adenosyltransferase family. Homotrimer.

The catalysed reaction is 2 cob(II)alamin + AH2 + 2 ATP = 2 adenosylcob(III)alamin + 2 triphosphate + A + 2 H(+). Is potentially allosterically regulated by GTP/GDP, which enhances its affinity for AdoCbl by 5-fold. Binds cob(II)alamin weakly in the absence of ATP. The presence of ATP (but not GTP or GDP) increases the affinity of cob(II)alamin for the enzyme, and stoichiometric binding is observed. GTP blocks the transfer of cob(II)alamin to IcmF from ATR, thus averting its reconstitution with inactive cofactor. Its function is as follows. Adenosyltransferase that catalyzes the conversion of cob(II)alamin to adenosylcob(III)alamin (AdoCbl) in the presence of ATP and an electron donor. Acts as an accessory protein of IcmF that functions in cofactor repair, since IcmF is prone to inactivation during catalytic turnover due to the occasional loss of the 5'-deoxyadenosine moiety and formation of the inactive cob(II)alamin cofactor in its active site. Thus, receives and repairs the inactive cofactor, which is then reloaded onto IcmF in a GTPase-gated step. This Cupriavidus metallidurans (strain ATCC 43123 / DSM 2839 / NBRC 102507 / CH34) (Ralstonia metallidurans) protein is Cobalamin adenosyltransferase.